The primary structure comprises 344 residues: Peroxidase 36 (344 aa).

A signal peptide spans 1–28 (MNTKTVKSMAGIVLSQISLVALFPLCIC). Disulfide bonds link Cys-50–Cys-130, Cys-83–Cys-88, Cys-136–Cys-337, and Cys-215–Cys-247. The active-site Proton acceptor is His-81. Asp-82, Val-85, Gly-87, Asp-89, and Ser-91 together coordinate Ca(2+). Pro-178 provides a ligand contact to substrate. A heme b-binding site is contributed by His-208. Thr-209 provides a ligand contact to Ca(2+). N-linked (GlcNAc...) asparagine glycosylation is present at Asn-224. Ca(2+) is bound by residues Asp-260, Thr-263, and Asp-268.

Belongs to the peroxidase family. Classical plant (class III) peroxidase subfamily. Heme b serves as cofactor. Requires Ca(2+) as cofactor.

It localises to the secreted. It catalyses the reaction 2 a phenolic donor + H2O2 = 2 a phenolic radical donor + 2 H2O. Functionally, removal of H(2)O(2), oxidation of toxic reductants, biosynthesis and degradation of lignin, suberization, auxin catabolism, response to environmental stresses such as wounding, pathogen attack and oxidative stress. These functions might be dependent on each isozyme/isoform in each plant tissue. In Arabidopsis thaliana (Mouse-ear cress), this protein is Peroxidase 36 (PER36).